Consider the following 685-residue polypeptide: Keratin, type II cytoskeletal 2 epidermal (685 aa).

Residues 1-20 (MSCQISCKSRRGGGGGGGGG) are disordered. The interval 1 to 196 (MSCQISCKSR…DPEIQNVKSQ (196 aa)) is head. Position 22 is an asymmetric dimethylarginine (Arg22). 2 positions are modified to phosphoserine: Ser25 and Ser28. Arg52 carries the omega-N-methylarginine modification. Phosphoserine is present on Ser64. The interval 197–232 (EREQIKTLNNKFASFIDTVRFLEQQNQVLHTKWELL) is coil 1A. Residues 197–511 (EREQIKTLNN…KLLEGEECRM (315 aa)) enclose the IF rod domain. The linker 1 stretch occupies residues 233 to 251 (QQLDVGTRTTNLDPVFQAY). Residues 252–343 (IGILKKQVDR…TLYDTELSQL (92 aa)) form a coil 1B region. Positions 344–367 (QQNVTDTNVILSMDNNRNLDLDSI) are linker 12. A coil 2 region spans residues 368-507 (IAEVQSQYEI…ATYRKLLEGE (140 aa)). Residues 508–685 (ECRMSGDFSD…CGSGVTFSFR (178 aa)) are tail. The interval 532–685 (VASKAGFGSG…CGSGVTFSFR (154 aa)) is disordered. Over residues 538–678 (FGSGGQSSGG…GSGSGEGCGS (141 aa)) the composition is skewed to gly residues. Residues Arg554, Arg588, Arg603, and Arg653 each carry the omega-N-methylarginine modification.

It belongs to the intermediate filament family. In terms of assembly, heterotetramer of two type I and two type II keratins. Associates with KRT10.

The protein resides in the cytoplasm. Probably contributes to terminal cornification. Associated with keratinocyte activation, proliferation and keratinization. Required for maintenance of corneocytes and keratin filaments in suprabasal keratinocytes in the epidermis of the ear, potentially via moderation of expression and localization of keratins and their partner proteins. Plays a role in the establishment of the epidermal barrier on plantar skin. This is Keratin, type II cytoskeletal 2 epidermal from Rattus norvegicus (Rat).